The primary structure comprises 292 residues: ATP synthase gamma chain (292 aa).

It belongs to the ATPase gamma chain family. F-type ATPases have 2 components, CF(1) - the catalytic core - and CF(0) - the membrane proton channel. CF(1) has five subunits: alpha(3), beta(3), gamma(1), delta(1), epsilon(1). CF(0) has three main subunits: a, b and c.

Its subcellular location is the cell inner membrane. Functionally, produces ATP from ADP in the presence of a proton gradient across the membrane. The gamma chain is believed to be important in regulating ATPase activity and the flow of protons through the CF(0) complex. This is ATP synthase gamma chain from Maridesulfovibrio salexigens (strain ATCC 14822 / DSM 2638 / NCIMB 8403 / VKM B-1763) (Desulfovibrio salexigens).